Reading from the N-terminus, the 340-residue chain is Phosphoribosylformylglycinamidine cyclo-ligase (340 aa).

This sequence belongs to the AIR synthase family.

The protein localises to the cytoplasm. The catalysed reaction is 2-formamido-N(1)-(5-O-phospho-beta-D-ribosyl)acetamidine + ATP = 5-amino-1-(5-phospho-beta-D-ribosyl)imidazole + ADP + phosphate + H(+). It functions in the pathway purine metabolism; IMP biosynthesis via de novo pathway; 5-amino-1-(5-phospho-D-ribosyl)imidazole from N(2)-formyl-N(1)-(5-phospho-D-ribosyl)glycinamide: step 2/2. This Streptococcus mutans serotype c (strain ATCC 700610 / UA159) protein is Phosphoribosylformylglycinamidine cyclo-ligase.